The chain runs to 1148 residues: MCSSINEGPYNSPTFGKSLSLKVDGGFNAVSINPSGRDIVLASRQGLYIIDLDDPFTPPRWLHHITPWQVADVQWSPHPAKPYWIVSTSNQKAIIWNLAKSSSNAIEFVLHGHSRAITDINFNPQHPDVLATCSVDTYVHAWDMRSPHRPFYSTSSWRSAASQVKWNYKDPNVLASSHGNDIFVWDLRKGSTPLCSLKGHVSSVNSIDFNRFKYSEIMSSSNDGTVKFWDYSKSTTESKRTVTTNFPIWRGRYLPFGEGYCIMPMVGGNNAVYLINLCDDDDSEQNKKTKLQPIYAFKGHSDRVIDFLWRSRHTCDGDYDDREFQLVTWSKDCDLKLWPISDSIYGKVNFDRGKRLEEKLPDYDYCSYNKEPENRENVQKNEFRRLRENFVTTSGLKKNKTNHITWLSGIRMNSATSQEDLFNETKIQNLGEEVSAIGHKFPKVVFEKISVSTRELCLTLNGPWSEENPDDYIFLRISINFPLNYPNKGDPPKFTIEENSNLTMSKRQEILSNLATIGQKYTDSNLYCLEPCIRFVLGEKVSLEDIEEGQEPLLNFDIADHIDFEELSSLDSSYSDSQNPENLSSQSDIESYKEALVFPDTSNQGLDFGRNLALDTTPVPNGCGSCWTATGELFCFFANEKKPEKKQNAIIKLSQKEAGVEKHPFKIEPQVLYDKEVDSSVITAADELKARPKRYVDTLGLGGGTNGDSRTYFDDETSSDDSFDSVADDWDDILRNDIIVRTKIPILRGNFKAFSSVHSESGKTVESTKKNKNLVISKNFSSLLSDRKELALEYLFMDATPEGFARNNALVAEKFDLDEISHCWQILSDMLIDQSDYDPYTTIWNNHPMGIKWFIKEAIVYFERQQNLQMLAMLCCVILSARRKKIPARYYGQELENMEGTIVFNDNESQNTSFWKGSDAFSTRSRSSTVTPNFYGNHLRGKNIHGGDNSSIRSDDHHARLRTHNTLNGSSKFTEPAQKQGSRAISSSPFHSRMPDIKVELLHDDIIEAYEQEDLLHLEVSDIPKFQTYIYQYSKLLFRWGLPLERVKILKVSTDFRSSYSSQGIPPNNNKKSPYNGVLTHWIENNEFGEEKFLARNCNYCDLRVTRSSFICGNCQHVLHSSCARIWWEIGDECPSGCGCNCPEMFDA.

5 WD repeats span residues 63 to 106 (HHIT…SNAI), 112 to 152 (GHSR…RPFY), 156 to 195 (SWRS…TPLC), 199 to 239 (GHVS…TESK), and 299 to 348 (GHSD…YGKV). Positions 432-543 (EEVSAIGHKF…RFVLGEKVSL (112 aa)) constitute an RWD domain. Ser-759 bears the Phosphoserine mark. The segment at 963–990 (THNTLNGSSKFTEPAQKQGSRAISSSPF) is disordered. Polar residues predominate over residues 964–990 (HNTLNGSSKFTEPAQKQGSRAISSSPF).

The protein belongs to the WD repeat WDR59 family. As to quaternary structure, component of the SEA complex composed of at least IML1/SEA1, RTC1/SEA2, MTC5/SEA3, NPR2, NPR3, SEA4, SEC13 and SEH1.

The protein localises to the vacuole membrane. Functionally, component of the SEA complex which coats the vacuolar membrane and is involved in intracellular trafficking, autophagy, response to nitrogen starvation, and amino acid biogenesis. May be involved in telomere capping. The polypeptide is Maintenance of telomere capping protein 5 (MTC5) (Saccharomyces cerevisiae (strain ATCC 204508 / S288c) (Baker's yeast)).